The sequence spans 295 residues: Dehydrodolichyl diphosphate synthase 6 (295 aa).

It belongs to the UPP synthase family. It depends on Mg(2+) as a cofactor.

It participates in protein modification; protein glycosylation. Functionally, catalyzes cis-prenyl chain elongation to produce the polyprenyl backbone of dolichol, a glycosyl carrier-lipid required for the biosynthesis of several classes of glycoprotein. This Arabidopsis thaliana (Mouse-ear cress) protein is Dehydrodolichyl diphosphate synthase 6.